The chain runs to 429 residues: GDP-fucose protein O-fucosyltransferase 2 (429 aa).

Positions 1–21 (MATLSFVFLLLGAVSWPPASA) are cleaved as a signal peptide. 53–57 (PEGFN) is a binding site for GDP-beta-L-fucose. The active-site Proton acceptor is the Glu54. A disulfide bond links Cys161 and Cys192. N-linked (GlcNAc...) asparagine glycans are attached at residues Asn189, Asn209, and Asn259. GDP-beta-L-fucose-binding positions include 292–294 (HLR), Asp371, and 388–389 (TF). Cys412 and Cys419 are oxidised to a cystine.

The protein belongs to the glycosyltransferase 68 family.

The protein resides in the endoplasmic reticulum. It localises to the golgi apparatus. It catalyses the reaction L-seryl-[protein] + GDP-beta-L-fucose = 3-O-(alpha-L-fucosyl)-L-seryl-[protein] + GDP + H(+). It carries out the reaction L-threonyl-[protein] + GDP-beta-L-fucose = 3-O-(alpha-L-fucosyl)-L-threonyl-[protein] + GDP + H(+). It participates in protein modification; protein glycosylation. Functionally, catalyzes the reaction that attaches fucose through an O-glycosidic linkage to a conserved serine or threonine residue in the consensus sequence C1-X-X-S/T-C2 of thrombospondin type I repeats (TSRs) where C1 and C2 are the first and second cysteines of the repeat, respectively. O-fucosylates members of several protein families including the ADAMTS, the thrombospondin (TSP) and spondin families. Required for the proper secretion of ADAMTS family members such as ADAMTSL1 and ADAMTS13. The O-fucosylation of TSRs is also required for restricting epithelial to mesenchymal transition (EMT), maintaining the correct patterning of mesoderm and localization of the definite endoderm. This chain is GDP-fucose protein O-fucosyltransferase 2 (POFUT2), found in Pan troglodytes (Chimpanzee).